A 271-amino-acid chain; its full sequence is Large ribosomal subunit protein uL18 (271 aa).

Positions 245-264 (IRENPCPPKKERTKPADAKR) are enriched in basic and acidic residues. A disordered region spans residues 245–271 (IRENPCPPKKERTKPADAKRWSPQAHL).

This sequence belongs to the universal ribosomal protein uL18 family. In terms of assembly, component of the large ribosomal subunit (LSU).

It localises to the cytoplasm. The protein resides in the nucleus. In terms of biological role, component of the ribosome, a large ribonucleoprotein complex responsible for the synthesis of proteins in the cell. The small ribosomal subunit (SSU) binds messenger RNAs (mRNAs) and translates the encoded message by selecting cognate aminoacyl-transfer RNA (tRNA) molecules. The large subunit (LSU) contains the ribosomal catalytic site termed the peptidyl transferase center (PTC), which catalyzes the formation of peptide bonds, thereby polymerizing the amino acids delivered by tRNAs into a polypeptide chain. The nascent polypeptides leave the ribosome through a tunnel in the LSU and interact with protein factors that function in enzymatic processing, targeting, and the membrane insertion of nascent chains at the exit of the ribosomal tunnel. The protein is Large ribosomal subunit protein uL18 (RPL5) of Dunaliella salina (Green alga).